The primary structure comprises 211 residues: Peptide methionine sulfoxide reductase MsrA (211 aa).

Cys60 is a catalytic residue.

It belongs to the MsrA Met sulfoxide reductase family.

The catalysed reaction is L-methionyl-[protein] + [thioredoxin]-disulfide + H2O = L-methionyl-(S)-S-oxide-[protein] + [thioredoxin]-dithiol. It carries out the reaction [thioredoxin]-disulfide + L-methionine + H2O = L-methionine (S)-S-oxide + [thioredoxin]-dithiol. Its function is as follows. Has an important function as a repair enzyme for proteins that have been inactivated by oxidation. Catalyzes the reversible oxidation-reduction of methionine sulfoxide in proteins to methionine. This Methanosarcina mazei (strain ATCC BAA-159 / DSM 3647 / Goe1 / Go1 / JCM 11833 / OCM 88) (Methanosarcina frisia) protein is Peptide methionine sulfoxide reductase MsrA.